The primary structure comprises 405 residues: MNHLPMPTFGPLAGVRVVFSGIEIAGPFAGQMFAEWGAEVIWIENVAWADTIRVQPNYPQLSRRNLHALSLNIFKDEGREAFLKLMETTDIFIEASKGPAFARRGITDEVLWEHNPKLVIAHLSGFGQYGTEEYTNLPAYNTIAQAFSGYLIQNGDVDQPMPAFPYTADYFSGMTATTAALAALHKVRETGKGESIDIAMYEVMLRMGQYFMMDYFNGGEICPRMTKGKDPYYAGCGLYKCADGYIVMELVGITQINECFKDIGLAHILGTPEVPEGTQLIHRVECPYGPLVEEKLDAWLATHTIADVQARFAELNIACAKVLTIPELEGNPQYVARESITQWQTMDGRTCKGPNIMPKFKNNPGKIWRGMPSHGMDTAAILKNIGYSEADIKELVGKGLAKVED.

CoA is bound by residues Lys-97 and Arg-104. Asp-169 acts as the Nucleophile in catalysis.

It belongs to the CoA-transferase III family. CaiB subfamily. Homodimer.

The protein resides in the cytoplasm. The enzyme catalyses crotonobetainyl-CoA + (R)-carnitine = crotonobetaine + (R)-carnitinyl-CoA. It catalyses the reaction 4-(trimethylamino)butanoyl-CoA + (R)-carnitine = (R)-carnitinyl-CoA + 4-(trimethylamino)butanoate. The protein operates within amine and polyamine metabolism; carnitine metabolism. Catalyzes the reversible transfer of the CoA moiety from gamma-butyrobetainyl-CoA to L-carnitine to generate L-carnitinyl-CoA and gamma-butyrobetaine. Is also able to catalyze the reversible transfer of the CoA moiety from gamma-butyrobetainyl-CoA or L-carnitinyl-CoA to crotonobetaine to generate crotonobetainyl-CoA. This Salmonella choleraesuis (strain SC-B67) protein is L-carnitine CoA-transferase.